Here is a 431-residue protein sequence, read N- to C-terminus: Adenylosuccinate synthetase (431 aa).

GTP is bound by residues 13 to 19 (GDEGKGK) and 41 to 43 (GHT). The Proton acceptor role is filled by aspartate 14. The Mg(2+) site is built by aspartate 14 and glycine 41. IMP is bound by residues 14–17 (DEGK), 39–42 (NAGH), threonine 130, arginine 144, glutamine 225, threonine 240, and arginine 304. The Proton donor role is filled by histidine 42. Residue 300–306 (ATTGRKR) participates in substrate binding. Residues arginine 306, 332-334 (KLD), and 415-417 (STG) contribute to the GTP site.

This sequence belongs to the adenylosuccinate synthetase family. As to quaternary structure, homodimer. It depends on Mg(2+) as a cofactor.

It localises to the cytoplasm. The enzyme catalyses IMP + L-aspartate + GTP = N(6)-(1,2-dicarboxyethyl)-AMP + GDP + phosphate + 2 H(+). It participates in purine metabolism; AMP biosynthesis via de novo pathway; AMP from IMP: step 1/2. Functionally, plays an important role in the de novo pathway of purine nucleotide biosynthesis. Catalyzes the first committed step in the biosynthesis of AMP from IMP. The chain is Adenylosuccinate synthetase from Shewanella amazonensis (strain ATCC BAA-1098 / SB2B).